The following is a 796-amino-acid chain: Conidiophore development regulator abaA (796 aa).

The TEA DNA-binding region spans 133-207 (GKDGEPVWSD…QVLDSFLKGD (75 aa)). A disordered region spans residues 215-254 (REQSDRSTAQTQPVGPRWRTSMDHLPSSHYGTHATSSYPE). The span at 243–252 (HYGTHATSSY) shows a compositional bias: polar residues. The tract at residues 341–362 (LSDVNDPLNCEIILLETNLELM) is leucine-zipper-like. The tract at residues 612 to 643 (EGLSDKTAPTSVLDPFPNLTQQTTSQTAGINV) is disordered. A compositionally biased stretch (polar residues) spans 629–643 (NLTQQTTSQTAGINV).

The protein belongs to the TEC1 family.

It is found in the nucleus. Its function is as follows. BrlA, abaA and wetA are pivotal regulators of conidiophore development and conidium maturation. They act individually and together to regulate their own expression and that of numerous other sporulation-specific gene. Controls temporal and spatial specificity in Aspergillus development. Directs the differentiation of phialides and is continuously required for maintenance of their function. Expression of abaA leads to activation of brlA and wetA, cessation of vegetative growth, and accentuated cellular vacuolization. Binds to the sequence 5'-CATTCY-3', where Y is a pyrimidine, making both major- and minor-groove contacts. Multiple abaA binding sites are present in the cis-acting regulatory regions of several developmentally controlled structural genes as well as those of the upstream regulatory gene brlA, the downstream regulatory gene wetA, and abaA itself. This chain is Conidiophore development regulator abaA, found in Emericella nidulans (strain FGSC A4 / ATCC 38163 / CBS 112.46 / NRRL 194 / M139) (Aspergillus nidulans).